Consider the following 261-residue polypeptide: Zaragozic acid A biosynthesis cluster protein 8 (261 aa).

The span at 242–254 (GTRSHTPAATQRR) shows a compositional bias: polar residues. Positions 242–261 (GTRSHTPAATQRRGQGRGCG) are disordered.

It functions in the pathway secondary metabolite biosynthesis. Functionally, part of the gene cluster that mediates the biosynthesis of squalestatin S1 (SQS1, also known as zaragozic acid A), a heavily oxidized fungal polyketide that offers potent cholesterol lowering activity by targeting squalene synthase (SS). SQS1 is composed of a 2,8-dioxobicyclic[3.2.1]octane-3,4,5-tricarboxyclic acid core that is connected to two lipophilic polyketide arms. These initial steps feature the priming of an unusual benzoic acid starter unit onto the highly reducing polyketide synthase clz14, followed by oxaloacetate extension and product release to generate a tricarboxylic acid containing product. The phenylalanine ammonia lyase (PAL) clz10 and the acyl-CoA ligase clz12 are involved in transforming phenylalanine into benzoyl-CoA. The citrate synthase-like protein clz17 is involved in connecting the C-alpha-carbons of the hexaketide chain and oxaloacetate to afford the tricarboxylic acid unit. The potential hydrolytic enzymes, clz11 and clz13, are in close proximity to pks2 and may participate in product release. On the other side, the tetraketide arm is synthesized by a the squalestatin tetraketide synthase clz2 and enzymatically esterified to the core in the last biosynthetic step, by the acetyltransferase clz6. The biosynthesis of the tetraketide must involve 3 rounds of chain extension. After the first and second rounds methyl-transfer occurs, and in all rounds of extension the ketoreductase and dehydratase are active. The enoyl reductase and C-MeT of clz2 are not active in the final round of extension. The acetyltransferase clz6 appears to have a broad substrate selectivity for its acyl CoA substrate, allowing the in vitro synthesis of novel squalestatins. The biosynthesis of SQS1 requires several oxidative steps likely performed by oxidoreductases clz3, clz15 and clz16. Finally, in support of the identification of the cluster as being responsible for SQS1 production, the cluster contains a gene encoding a putative squalene synthase (SS) clz20, suggesting a likely mechanism for self-resistance. This is Zaragozic acid A biosynthesis cluster protein 8 from Cochliobolus lunatus (Filamentous fungus).